A 127-amino-acid polypeptide reads, in one-letter code: Ribosome-binding factor A (127 aa).

It belongs to the RbfA family. Monomer. Binds 30S ribosomal subunits, but not 50S ribosomal subunits or 70S ribosomes.

Its subcellular location is the cytoplasm. One of several proteins that assist in the late maturation steps of the functional core of the 30S ribosomal subunit. Associates with free 30S ribosomal subunits (but not with 30S subunits that are part of 70S ribosomes or polysomes). Required for efficient processing of 16S rRNA. May interact with the 5'-terminal helix region of 16S rRNA. This Actinobacillus pleuropneumoniae serotype 7 (strain AP76) protein is Ribosome-binding factor A.